The following is a 552-amino-acid chain: ATP synthase subunit alpha (552 aa).

Position 173-180 (173-180 (GDRQTGKT)) interacts with ATP. Residues 516–552 (DGKPLVNEPAPSPLDPGLVRQESIPVHRPAARKDDEG) are disordered.

Belongs to the ATPase alpha/beta chains family. As to quaternary structure, F-type ATPases have 2 components, CF(1) - the catalytic core - and CF(0) - the membrane proton channel. CF(1) has five subunits: alpha(3), beta(3), gamma(1), delta(1), epsilon(1). CF(0) has three main subunits: a(1), b(2) and c(9-12). The alpha and beta chains form an alternating ring which encloses part of the gamma chain. CF(1) is attached to CF(0) by a central stalk formed by the gamma and epsilon chains, while a peripheral stalk is formed by the delta and b chains.

The protein resides in the cell membrane. The catalysed reaction is ATP + H2O + 4 H(+)(in) = ADP + phosphate + 5 H(+)(out). In terms of biological role, produces ATP from ADP in the presence of a proton gradient across the membrane. The alpha chain is a regulatory subunit. This is ATP synthase subunit alpha from Frankia casuarinae (strain DSM 45818 / CECT 9043 / HFP020203 / CcI3).